A 273-amino-acid polypeptide reads, in one-letter code: 4-hydroxy-tetrahydrodipicolinate reductase (273 aa).

NAD(+) is bound by residues glycine 11–methionine 16 and glycine 106–threonine 108. Histidine 162 acts as the Proton donor/acceptor in catalysis. Histidine 163 contacts (S)-2,3,4,5-tetrahydrodipicolinate. The Proton donor role is filled by lysine 166. Glycine 172 to threonine 173 is a binding site for (S)-2,3,4,5-tetrahydrodipicolinate.

It belongs to the DapB family.

It localises to the cytoplasm. It carries out the reaction (S)-2,3,4,5-tetrahydrodipicolinate + NAD(+) + H2O = (2S,4S)-4-hydroxy-2,3,4,5-tetrahydrodipicolinate + NADH + H(+). The enzyme catalyses (S)-2,3,4,5-tetrahydrodipicolinate + NADP(+) + H2O = (2S,4S)-4-hydroxy-2,3,4,5-tetrahydrodipicolinate + NADPH + H(+). It functions in the pathway amino-acid biosynthesis; L-lysine biosynthesis via DAP pathway; (S)-tetrahydrodipicolinate from L-aspartate: step 4/4. Its function is as follows. Catalyzes the conversion of 4-hydroxy-tetrahydrodipicolinate (HTPA) to tetrahydrodipicolinate. The protein is 4-hydroxy-tetrahydrodipicolinate reductase of Synechococcus elongatus (strain ATCC 33912 / PCC 7942 / FACHB-805) (Anacystis nidulans R2).